We begin with the raw amino-acid sequence, 293 residues long: Pyridoxal 5'-phosphate synthase subunit PdxS (293 aa).

D23 contacts D-ribose 5-phosphate. Catalysis depends on K80, which acts as the Schiff-base intermediate with D-ribose 5-phosphate. G152 provides a ligand contact to D-ribose 5-phosphate. R164 contributes to the D-glyceraldehyde 3-phosphate binding site. Residues G213 and 234-235 contribute to the D-ribose 5-phosphate site; that span reads GS.

The protein belongs to the PdxS/SNZ family. In the presence of PdxT, forms a dodecamer of heterodimers.

It carries out the reaction aldehydo-D-ribose 5-phosphate + D-glyceraldehyde 3-phosphate + L-glutamine = pyridoxal 5'-phosphate + L-glutamate + phosphate + 3 H2O + H(+). It participates in cofactor biosynthesis; pyridoxal 5'-phosphate biosynthesis. Its function is as follows. Catalyzes the formation of pyridoxal 5'-phosphate from ribose 5-phosphate (RBP), glyceraldehyde 3-phosphate (G3P) and ammonia. The ammonia is provided by the PdxT subunit. Can also use ribulose 5-phosphate and dihydroxyacetone phosphate as substrates, resulting from enzyme-catalyzed isomerization of RBP and G3P, respectively. This chain is Pyridoxal 5'-phosphate synthase subunit PdxS, found in Methanothermobacter thermautotrophicus (strain ATCC 29096 / DSM 1053 / JCM 10044 / NBRC 100330 / Delta H) (Methanobacterium thermoautotrophicum).